The sequence spans 378 residues: Aminotransferase apf4 (378 aa).

Arginine 88 lines the pyridoxal 5'-phosphate pocket. At lysine 189 the chain carries N6-(pyridoxal phosphate)lysine. Glutamate 228 serves as a coordination point for pyridoxal 5'-phosphate. Positions 359–378 (ERGHNGQPTADPTRVIEMPE) are disordered.

This sequence belongs to the class-IV pyridoxal-phosphate-dependent aminotransferase family. The cofactor is pyridoxal 5'-phosphate.

It participates in secondary metabolite biosynthesis. In terms of biological role, aminotransferase; part of the gene cluster that mediates the biosynthesis of the cyclic tetrapeptide apicidin F (APF). The non-ribosomal peptide synthetase apf1 incorporates four different amino acids to produce apicidin F: L-phenylalanine, D-pipecolic acid (D-pip), N-methoxy-L-tryptophan and L-2-aminooctanedioic acid. L-Phenylalanine is the only proteinogenic amino acid directly used by apf1. The 3 other apf1 substrates are non-proteinogenic and have to be modified by other enzymes of the cluster. Lysine is converted to delta-1-pyrroline-5-carboxylate (P5C) which is reduced to L-pipecolic acid (L-pip) by apf3. L-pip is epimerized to D-pip, probably by apf1 activity, prior to incorporation. L-Tryptophan is N-oxidyzed by one of the cytochrome P450 monooxygenases (apf7 or apf8), and further methylated at the hydroxy group by the O-methyltransferase apf6 to yield N-methoxy-L-tryptophan. The synthesis of the fourth apf1 substrate is more complex. The fatty acid synthase apf5 is involved in the synthesis of the octanoic acid backbone of L-2-aminooctanedioic acid by fixing one acetyl-CoA unit and three malonyl-CoA units. Then one of the cytochrome P450 monooxygenases (apf7 or apf8) may oxidize this backbone to 2-oxooctanoic acid. The aminotransferase apf4 is predicted to catalyze the exchange of the keto group with an amino group. The next step would be the oxidation of 2-aminooctanoic acid by one of the cytochrome P450 monooxygenases (apf7 or apf8). The last step is the oxidation of 2-amino-8-hydroxyoctanoic acid to 2-aminooctanedioic acid is catalyzed by the FAD-dependent monooxygenase apf9. This is Aminotransferase apf4 from Gibberella fujikuroi (strain CBS 195.34 / IMI 58289 / NRRL A-6831) (Bakanae and foot rot disease fungus).